The chain runs to 245 residues: Ribosomal RNA large subunit methyltransferase E (245 aa).

The segment at 1–25 (MTKSPIGGNRSGRKLGQKVKKGKLK) is disordered. Residues 11–25 (SGRKLGQKVKKGKLK) are compositionally biased toward basic residues. S-adenosyl-L-methionine-binding residues include G81, W83, D104, D120, and D144. K184 serves as the catalytic Proton acceptor.

This sequence belongs to the class I-like SAM-binding methyltransferase superfamily. RNA methyltransferase RlmE family.

It is found in the cytoplasm. The catalysed reaction is uridine(2552) in 23S rRNA + S-adenosyl-L-methionine = 2'-O-methyluridine(2552) in 23S rRNA + S-adenosyl-L-homocysteine + H(+). Its function is as follows. Specifically methylates the uridine in position 2552 of 23S rRNA at the 2'-O position of the ribose in the fully assembled 50S ribosomal subunit. The protein is Ribosomal RNA large subunit methyltransferase E of Rhizobium meliloti (strain 1021) (Ensifer meliloti).